A 282-amino-acid chain; its full sequence is Nucleotide-binding protein Shew_3314 (282 aa).

An ATP-binding site is contributed by glycine 8–serine 15. GTP is bound at residue aspartate 56 to asparagine 59.

Belongs to the RapZ-like family.

In terms of biological role, displays ATPase and GTPase activities. The polypeptide is Nucleotide-binding protein Shew_3314 (Shewanella loihica (strain ATCC BAA-1088 / PV-4)).